The following is a 571-amino-acid chain: DM7 family protein CG15332 (571 aa).

Positions 440–472 (TRDDGINTADYQSQFPELEPEPEPEPEDEGEDV) are disordered. The span at 457–471 (LEPEPEPEPEDEGED) shows a compositional bias: acidic residues.

It belongs to the DM7 family.

In Drosophila melanogaster (Fruit fly), this protein is DM7 family protein CG15332.